The primary structure comprises 236 residues: Apoptosis regulator Bcl-2 (236 aa).

Residues 10 to 30 (DNREIVMKYIHYKLSQRGYEW) carry the BH4 motif. Phosphothreonine; by MAPK8 is present on T69. Residue S70 is modified to Phosphoserine; by MAPK8 and PKC. Phosphoserine; by MAPK8 is present on S84. The BH3 signature appears at 90-104 (VHLTLRRAGDDFSRR). Residues 133–152 (ELFRDGVNWGRIVAFFEFGG) carry the BH1 motif. The short motif at 184–199 (TWIQDNGGWDAFVELY) is the BH2 element. A helical membrane pass occupies residues 209–230 (FSWLSLKTLLSLALVGACITLG).

Belongs to the Bcl-2 family. Forms homodimers, and heterodimers with BAX, BAD, BAK and Bcl-X(L). Heterodimerization with BAX requires intact BH1 and BH2 motifs, and is necessary for anti-apoptotic activity. Component of the complex, at least composed of LRPPRC, BECN1 and BCL2; the interactions prevent BECN1 from forming an autophagy-inducing complex with PIK3C3. Interacts with EI24. Also interacts with APAF1, BBC3, BCL2L1, BNIPL, MRPL41 and TP53BP2. Binding to FKBP8 seems to target BCL2 to the mitochondria and probably interferes with the binding of BCL2 to its targets. Interacts with BAG1 in an ATP-dependent manner. Interacts with RAF1 (the 'Ser-338' and 'Ser-339' phosphorylated form). Interacts (via the BH4 domain) with EGLN3; the interaction prevents the formation of the BAX-BCL2 complex and inhibits the anti-apoptotic activity of BCL2. Interacts with G0S2; this interaction also prevents the formation of the anti-apoptotic BAX-BCL2 complex. Interacts with RTL10/BOP. Interacts with the SCF(FBXO10) complex. Interacts (via the loop between motifs BH4 and BH3) with NLRP1 (via LRR repeats), but not with NLRP2, NLRP3, NLRP4, PYCARD, nor MEFV. Interacts with GIMAP3/IAN4, GIMAP4/IAN1 and GIMAP5/IAN5. Interacts with BCAP31. Interacts with IRF3; the interaction is inhibited by Sendai virus infection. Interacts with BECN1; thereby inhibiting autophagy in non-starvation conditions. Interacts with AMBRA1; thereby inhibiting autophagy. Phosphorylation/dephosphorylation on Ser-70 regulates anti-apoptotic activity. Growth factor-stimulated phosphorylation on Ser-70 by PKC is required for the anti-apoptosis activity and occurs during the G2/M phase of the cell cycle. In the absence of growth factors, BCL2 appears to be phosphorylated by other protein kinases such as ERKs and stress-activated kinases. Phosphorylated by MAPK8/JNK1 at Thr-69, Ser-70 and Ser-84, which stimulates starvation-induced autophagy. Dephosphorylated by protein phosphatase 2A (PP2A). Post-translationally, proteolytically cleaved by caspases during apoptosis. The cleaved protein, lacking the BH4 motif, has pro-apoptotic activity, causes the release of cytochrome c into the cytosol promoting further caspase activity. In terms of processing, monoubiquitinated by PRKN, leading to an increase in its stability. Ubiquitinated by SCF(FBXO10), leading to its degradation by the proteasome.

The protein localises to the mitochondrion outer membrane. The protein resides in the nucleus membrane. It is found in the endoplasmic reticulum membrane. It localises to the cytoplasm. In terms of biological role, suppresses apoptosis in a variety of cell systems including factor-dependent lymphohematopoietic and neural cells. Regulates cell death by controlling the mitochondrial membrane permeability. Appears to function in a feedback loop system with caspases. Inhibits caspase activity either by preventing the release of cytochrome c from the mitochondria and/or by binding to the apoptosis-activating factor (APAF-1). Also acts as an inhibitor of autophagy: interacts with BECN1 and AMBRA1 during non-starvation conditions and inhibits their autophagy function. May attenuate inflammation by impairing NLRP1-inflammasome activation, hence CASP1 activation and IL1B release. This chain is Apoptosis regulator Bcl-2 (BCL2), found in Cricetulus griseus (Chinese hamster).